A 300-amino-acid chain; its full sequence is B1 kinase (300 aa).

One can recognise a Protein kinase domain in the interval 16 to 282 (WVVGPLIGKG…ITMVNSLTYF (267 aa)). ATP is bound by residues 22–30 (IGKGGFGSI) and Lys45. Asn147 functions as the Proton acceptor in the catalytic mechanism.

Belongs to the protein kinase superfamily. Ser/Thr protein kinase family. Poxviruses subfamily. Interacts with host JIP1; this interaction increases the amount of MAPK bound to JIP1 and subsequently increases the activity of transcription factors, such as JUN, that respond to these complexes. Interacts with protein OPG198; this interaction inhibits the repressive activity of OPG198 pseudokinase on viral replication factory formation. Mg(2+) is required as a cofactor. In terms of processing, autophosphorylated.

Its subcellular location is the virion. The protein resides in the host cytoplasm. The enzyme catalyses L-seryl-[protein] + ATP = O-phospho-L-seryl-[protein] + ADP + H(+). It catalyses the reaction L-threonyl-[protein] + ATP = O-phospho-L-threonyl-[protein] + ADP + H(+). Essential serine/threonine-protein kinase that plays different role in the viral life cycle. Phosphorylates the host small ribosomal protein RACK1 thereby customizing the ribosomes to a state optimal for viral mRNAs (which contain poly-A leaders) but not for host mRNAs. Facilitates viral DNA replication by inhibiting host BANF1, a cellular host defense responsive to foreign DNA. Phosphorylates host BANF1 on serine and threonine residues; this leads to BANF1 relocalization to the cytoplasm, loss of dimerization and impaired DNA binding activity. Indeed, BANF1 activity depends on its DNA-binding property which is blocked by VPK1-mediated phosphorylation. Required for viral intermediate genes expression, probably by inhibiting host BANF1. Modulates cellular responses via host JUN by two different mechanisms, either by direct phosphorylation or by modulation of upstream JIP1-MAPK complexes. Seems to participate in the accumulation/processing of late proteins and thus in virion maturation. In addition, inhibits B12 repressive activity on viral DNA replication via a phosphorylation-dependent mechanism. The protein is B1 kinase (OPG187) of Homo sapiens (Human).